The sequence spans 128 residues: Disintegrin lebein-2-alpha (128 aa).

An N-terminal signal peptide occupies residues 1–20 (MIQVLLVTICLAVFPFHGSS). A propeptide spanning residues 21-46 (IILESGNVNDYEVVYPKKVTLLPTGA) is cleaved from the precursor. One can recognise a Disintegrin domain in the interval 47-111 (MNSANPCCDP…SDCPRNPWKS (65 aa)). 4 disulfides stabilise this stretch: Cys53–Cys76, Cys67–Cys73, Cys72–Cys97, and Cys85–Cys104. Residues 89–91 (MLD) carry the Cell attachment site; atypical (MLD) motif. Positions 112-128 (EEDEMKWSATAKGSVLM) are excised as a propeptide.

This sequence belongs to the disintegrin family. Dimeric disintegrin subfamily. Heterodimer with subunit beta; disulfide-linked. Expressed by the venom gland.

The protein resides in the secreted. Functionally, inhibits ADP-induced human platelet aggregation. Antagonist of alpha-IIb/beta-3 (ITGA2B/ITGB3). Also avidly binds to the laminin-binding beta-1 integrins (alpha-3/beta-1 (ITGA3/ITGB1), alpha-6/beta-1 (ITGA6/ITGB1), and alpha-7/beta-1 (ITGA7/ITGB1)) in an RGD-independent manner. In Macrovipera lebetinus (Levantine viper), this protein is Disintegrin lebein-2-alpha.